Here is a 385-residue protein sequence, read N- to C-terminus: Cytochrome b (385 aa).

The next 4 membrane-spanning stretches (helical) occupy residues Phe-32–Met-52, Trp-76–Gly-98, Thr-113–Val-133, and Phe-179–Ile-199. Residues His-82 and His-96 each contribute to the heme b site. His-183 and His-197 together coordinate heme b. His-202 is an a ubiquinone binding site. Helical transmembrane passes span Phe-226–Phe-246, Leu-290–Asp-310, Leu-322–Ala-342, and Phe-349–Pro-369.

It belongs to the cytochrome b family. As to quaternary structure, fungal cytochrome b-c1 complex contains 10 subunits; 3 respiratory subunits, 2 core proteins and 5 low-molecular weight proteins. Cytochrome b-c1 complex is a homodimer. It depends on heme b as a cofactor.

The protein resides in the mitochondrion inner membrane. Its function is as follows. Component of the ubiquinol-cytochrome c reductase complex (complex III or cytochrome b-c1 complex) that is part of the mitochondrial respiratory chain. The b-c1 complex mediates electron transfer from ubiquinol to cytochrome c. Contributes to the generation of a proton gradient across the mitochondrial membrane that is then used for ATP synthesis. This Aspergillus terreus (strain NIH 2624 / FGSC A1156) protein is Cytochrome b (cob).